Reading from the N-terminus, the 43-residue chain is Protein PsbN (43 aa).

Residues threonine 5–serine 27 form a helical membrane-spanning segment.

This sequence belongs to the PsbN family.

It is found in the plastid. Its subcellular location is the chloroplast thylakoid membrane. In terms of biological role, may play a role in photosystem I and II biogenesis. This is Protein PsbN from Anthoceros angustus (Hornwort).